The chain runs to 688 residues: DNA-directed RNA polymerase subunit beta' (688 aa).

The Zn(2+) site is built by Cys69, Cys71, Cys87, and Cys90. Asp489, Asp491, and Asp493 together coordinate Mg(2+).

This sequence belongs to the RNA polymerase beta' chain family. RpoC1 subfamily. In terms of assembly, in plastids the minimal PEP RNA polymerase catalytic core is composed of four subunits: alpha, beta, beta', and beta''. When a (nuclear-encoded) sigma factor is associated with the core the holoenzyme is formed, which can initiate transcription. It depends on Mg(2+) as a cofactor. The cofactor is Zn(2+).

It localises to the plastid. It is found in the chloroplast. It carries out the reaction RNA(n) + a ribonucleoside 5'-triphosphate = RNA(n+1) + diphosphate. DNA-dependent RNA polymerase catalyzes the transcription of DNA into RNA using the four ribonucleoside triphosphates as substrates. The polypeptide is DNA-directed RNA polymerase subunit beta' (Piper cenocladum (Ant piper)).